Reading from the N-terminus, the 388-residue chain is Subtilisin-like serine protease AsES (388 aa).

An N-terminal signal peptide occupies residues Met1–Gly15. A propeptide spans Ala16–Ala105 (removed in mature form). Residues Pro114–Gly388 form the Peptidase S8 domain. Residues Cys141 and Cys230 are joined by a disulfide bond. Catalysis depends on charge relay system residues Asp146 and His176. 2 N-linked (GlcNAc...) asparagine glycosylation sites follow: Asn232 and Asn237. Cys285 and Cys357 are disulfide-bonded. The active-site Charge relay system is the Ser331.

This sequence belongs to the peptidase S8 family.

It localises to the secreted. The elicitor proteolytic activity is completely inhibited by PMSF. The activity is also significantly reduced by aprotinin (leading to 37% residual activity), by leupeptin (leading to 54% residual activity), by the ovomucoid trypsin inhibitor (leading to 65% residual activity), and by p-aminobenzamidine (leading to 26% residual activity). Its function is as follows. Extracellular elicitor protein that induces a strong defense response in strawberry and confers both local and systemic plant resistance against the fungal pathogen Colletotricum acutatum, the casual agent of anthracnose disease. AsES activates a cascade of defense responses, including calcium influx, oxidative burst, hypersensitive cell-death response (HR), accumulation of autofluorescent compounds, cell-wall reinforcement with callose and lignin deposition, salicylic acid accumulation, and expression of defense-related genes, such as PR1, PG1, MYB30, RBOH-D, RBOH-F, CHI23, and FLS. The oxidative burst consists in a progressive extracellular accumulation of H(2)O(2) that starts immediately after the contact with AsES and is preceded by a rapid and transient cell membrane depolarization. During this phase takes place also a rapid intracellular accumulation of NO at the chloroplasts. After the first extracellular H(2)O(2) production phase, two intracellular H(2)O(2) accumulation events occur, the first 2 hours after induction, and the second 7 hours after induction. AsES also produces a transient increase of ion leakage, and a progressive alkalinization of the extracellular medium. Confers also local and systemic plant resistance against Botrytis cinerea in Arabidopsis thaliana. Systemic, but not local resistance is dependent on the length of exposure to AsES. The protection to B.cinerea is due to the induction of the plant defenses via the salicylic acid, jasmonic acid and ethylene signaling pathways. Exhibits subtilisin-like proteolytic activity which is necessary but not sufficient for its elicitor function in strawberry plants. Probably induces defense by means of proteolysis of one or multiple host proteins that are specific targets of this protease. The chain is Subtilisin-like serine protease AsES from Sarocladium strictum (Black bundle disease fungus).